Here is a 635-residue protein sequence, read N- to C-terminus: Moesin/ezrin/radixin homolog 2 (635 aa).

Residues 12 to 305 (LSVRVSTFDS…GNHDLYMRRR (294 aa)) form the FERM domain.

In terms of assembly, interacts with Moe and arm at the adherens junction. Forms a complex with Kibra and Ex. Interacts (via FERM domain) with Sav (via FBM motif). Interacts with Schip1. In terms of tissue distribution, expressed predominantly in the germline. Expressed in the developing oocyte from stage 6 to the end of oogenesis and in the apical ends of follical cells from stage 10. Ubiquitous expression throughout embryogenesis with enhanced expression in mesoderm of early embryos and midgut of late embryos. In embryonic CNS, expression is seen in neuropil and developing brain and is enhanced in neuronal cell bodies. In embryonic PNS, expression is seen within the cell body. In third instar larvae, expression is uniform in the eye imaginal disk and is enhanced at the morphogenetic furrow. In pupal eyes, expression is seen in the cytoplasm of secondary and tertiary pigment cells, bristle precursor cells and rhabdomeres.

The protein localises to the cell junction. It localises to the adherens junction. It is found in the cell membrane. The protein resides in the cytoplasm. Its subcellular location is the cytoskeleton. The protein localises to the apical cell membrane. It localises to the cell projection. It is found in the rhabdomere. Regulator of the Hippo/SWH (Sav/Wts/Hpo) signaling pathway, a signaling pathway that plays a pivotal role in organ size control and tumor suppression by restricting proliferation and promoting apoptosis. The core of this pathway is composed of a kinase cascade wherein Hippo (Hpo), in complex with its regulatory protein Salvador (Sav), phosphorylates and activates Warts (Wts) in complex with its regulatory protein Mats, which in turn phosphorylates and inactivates the Yorkie (Yki) oncoprotein. Mer acts synergistically along with Ex and Kibra to regulate the Hippo signaling pathway. The chain is Moesin/ezrin/radixin homolog 2 (Mer) from Drosophila melanogaster (Fruit fly).